Here is a 449-residue protein sequence, read N- to C-terminus: Glucose-6-phosphate isomerase (449 aa).

Glutamate 290 functions as the Proton donor in the catalytic mechanism. Catalysis depends on residues histidine 311 and lysine 425.

This sequence belongs to the GPI family.

The protein resides in the cytoplasm. The enzyme catalyses alpha-D-glucose 6-phosphate = beta-D-fructose 6-phosphate. The protein operates within carbohydrate biosynthesis; gluconeogenesis. It functions in the pathway carbohydrate degradation; glycolysis; D-glyceraldehyde 3-phosphate and glycerone phosphate from D-glucose: step 2/4. Its function is as follows. Catalyzes the reversible isomerization of glucose-6-phosphate to fructose-6-phosphate. The polypeptide is Glucose-6-phosphate isomerase (Exiguobacterium sibiricum (strain DSM 17290 / CCUG 55495 / CIP 109462 / JCM 13490 / 255-15)).